The sequence spans 202 residues: Uclacyanin-2 (202 aa).

The N-terminal stretch at 1–29 (MAMNGLSKMAVAAATALLLVLTIVPGAVA) is a signal peptide. The Phytocyanin domain occupies 30–126 (VTYTIEWTTG…GMKLAVNVVA (97 aa)). His65 lines the Cu cation pocket. N-linked (GlcNAc...) asparagine glycosylation is present at Asn86. The Cu cation site is built by Cys106, His111, and Met118. Residues 129-181 (AGPPATPTPPSSTPGTPTTPESPPSGGSPTPTTPTPGAGSTSPPPPPKASGAS) form a disordered region. Residues 141–169 (TPGTPTTPESPPSGGSPTPTTPTPGAGST) show a composition bias toward low complexity. A lipid anchor (GPI-anchor amidated serine) is attached at Ser178. Residues 179–202 (GASKGVMSYVLVGVSMVLGYGLWM) constitute a propeptide, removed in mature form.

The protein localises to the cell membrane. Functionally, probably acts as an electron carrier involved in oxygen activation and/or lignin formation. This Arabidopsis thaliana (Mouse-ear cress) protein is Uclacyanin-2.